Consider the following 276-residue polypeptide: Syntaxin-12 (276 aa).

N-acetylserine is present on serine 2. The Cytoplasmic portion of the chain corresponds to 2–248; the sequence is SYGPLDMYRN…RAAYYQKKSR (247 aa). The stretch at 33–131 forms a coiled coil; it reads IQRISQATAQ…RRVSEKEKES (99 aa). 4 positions are modified to phosphoserine: serine 139, serine 142, serine 218, and serine 225. The t-SNARE coiled-coil homology domain maps to 178-240; that stretch reads LELIKERETA…ERATEQLQRA (63 aa). The chain crosses the membrane as a helical; Anchor for type IV membrane protein span at residues 249-269; the sequence is KKMCILVLVLSVIILILGLII. Topologically, residues 270–276 are vesicular; the sequence is WLVYKTK.

This sequence belongs to the syntaxin family. In terms of assembly, interacts with NAPA and SNAP23. Identified in a complex containing STX6, STX12, VAMP4 and VTI1A. Associates with the BLOC-1 complex. Interacts with BLOC1S6. Interacts with GRIPAP1. Forms a complex with GRIP1, GRIA2 and NSG1; controls the intracellular fate of AMPAR and the endosomal sorting of the GRIA2 subunit toward recycling and membrane targeting. Interacts with NSG1. Interacts with TPC1. Interacts (via N-terminus) with VPS13B.

It localises to the endosome membrane. The protein localises to the golgi apparatus membrane. Its subcellular location is the endomembrane system. The protein resides in the early endosome membrane. It is found in the recycling endosome membrane. In terms of biological role, SNARE promoting fusion of transport vesicles with target membranes. Together with SNARE STX6, promotes movement of vesicles from endosomes to the cell membrane, and may therefore function in the endocytic recycling pathway. Through complex formation with GRIP1, GRIA2 and NSG1 controls the intracellular fate of AMPAR and the endosomal sorting of the GRIA2 subunit toward recycling and membrane targeting. This chain is Syntaxin-12 (STX12), found in Homo sapiens (Human).